The chain runs to 273 residues: Putative pyruvate, phosphate dikinase regulatory protein (273 aa).

An ADP-binding site is contributed by 153–160 (GVSRTSKT).

Belongs to the pyruvate, phosphate/water dikinase regulatory protein family. PDRP subfamily.

The enzyme catalyses N(tele)-phospho-L-histidyl/L-threonyl-[pyruvate, phosphate dikinase] + ADP = N(tele)-phospho-L-histidyl/O-phospho-L-threonyl-[pyruvate, phosphate dikinase] + AMP + H(+). It catalyses the reaction N(tele)-phospho-L-histidyl/O-phospho-L-threonyl-[pyruvate, phosphate dikinase] + phosphate + H(+) = N(tele)-phospho-L-histidyl/L-threonyl-[pyruvate, phosphate dikinase] + diphosphate. Bifunctional serine/threonine kinase and phosphorylase involved in the regulation of the pyruvate, phosphate dikinase (PPDK) by catalyzing its phosphorylation/dephosphorylation. The polypeptide is Putative pyruvate, phosphate dikinase regulatory protein (Sinorhizobium medicae (strain WSM419) (Ensifer medicae)).